Consider the following 421-residue polypeptide: D-amino acid dehydrogenase (421 aa).

3–17 (VLVLGGGVVGVASAY) is an FAD binding site.

The protein belongs to the DadA oxidoreductase family. FAD serves as cofactor.

It catalyses the reaction a D-alpha-amino acid + A + H2O = a 2-oxocarboxylate + AH2 + NH4(+). It functions in the pathway amino-acid degradation; D-alanine degradation; NH(3) and pyruvate from D-alanine: step 1/1. Oxidative deamination of D-amino acids. This chain is D-amino acid dehydrogenase, found in Methylobacterium nodulans (strain LMG 21967 / CNCM I-2342 / ORS 2060).